The primary structure comprises 84 residues: Large ribosomal subunit protein bL27 (84 aa).

The interval 1 to 22 is disordered; sequence MAHKKGASSTRNGRDSNAQRLG. The span at 7–19 shows a compositional bias: polar residues; sequence ASSTRNGRDSNAQ.

This sequence belongs to the bacterial ribosomal protein bL27 family.

The sequence is that of Large ribosomal subunit protein bL27 from Streptomyces avermitilis (strain ATCC 31267 / DSM 46492 / JCM 5070 / NBRC 14893 / NCIMB 12804 / NRRL 8165 / MA-4680).